Reading from the N-terminus, the 356-residue chain is Peptide chain release factor 1 (356 aa).

The residue at position 235 (Gln235) is an N5-methylglutamine.

This sequence belongs to the prokaryotic/mitochondrial release factor family. In terms of processing, methylated by PrmC. Methylation increases the termination efficiency of RF1.

It is found in the cytoplasm. Peptide chain release factor 1 directs the termination of translation in response to the peptide chain termination codons UAG and UAA. This chain is Peptide chain release factor 1, found in Mycobacteroides abscessus (strain ATCC 19977 / DSM 44196 / CCUG 20993 / CIP 104536 / JCM 13569 / NCTC 13031 / TMC 1543 / L948) (Mycobacterium abscessus).